The chain runs to 318 residues: 2,4-dinitroanisole O-demethylase subunit beta (318 aa).

The protein belongs to the metallo-beta-lactamase superfamily. As to quaternary structure, part of the complex DnhAB composed of the 2,4-dinitroanisole O-demethylase alpha (DnhA) and beta (DnhB) subunits.

The enzyme catalyses 2,4-dinitroanisole + H2O = 2,4-dinitrophenol + methanol + H(+). Its function is as follows. Involved in the degradation of 2,4-dinitroanisole (DNAN), an insensitive munition ingredient used in explosive formulations as a replacement for 2,4,6-trinitrotoluene (TNT). Catalyzes the removal of the methyl group from 2,4-dinitroanisole (DNAN) to yield 2,4-dinitrophenol (2,4-DNP) and methanol. The sequence is that of 2,4-dinitroanisole O-demethylase subunit beta from Nocardioides sp. (strain JS1661).